The sequence spans 557 residues: Phosphomethylpyrimidine synthase (557 aa).

Residues asparagine 197, methionine 226, tyrosine 255, histidine 291, 311 to 313 (SRG), 352 to 355 (DGLR), and glutamate 391 each bind substrate. A Zn(2+)-binding site is contributed by histidine 395. Tyrosine 418 lines the substrate pocket. Histidine 459 contributes to the Zn(2+) binding site. [4Fe-4S] cluster-binding residues include cysteine 539, cysteine 542, and cysteine 547.

The protein belongs to the ThiC family. In terms of assembly, homodimer. Requires [4Fe-4S] cluster as cofactor.

It catalyses the reaction 5-amino-1-(5-phospho-beta-D-ribosyl)imidazole + S-adenosyl-L-methionine = 4-amino-2-methyl-5-(phosphooxymethyl)pyrimidine + CO + 5'-deoxyadenosine + formate + L-methionine + 3 H(+). It participates in cofactor biosynthesis; thiamine diphosphate biosynthesis. Functionally, catalyzes the synthesis of the hydroxymethylpyrimidine phosphate (HMP-P) moiety of thiamine from aminoimidazole ribotide (AIR) in a radical S-adenosyl-L-methionine (SAM)-dependent reaction. The polypeptide is Phosphomethylpyrimidine synthase (Anaplasma phagocytophilum (strain HZ)).